A 311-amino-acid chain; its full sequence is Dermonecrotic toxin LlSicTox-alphaIII1i (311 aa).

Positions 1-21 (MYAHLALILGCWTVVLQGAET) are cleaved as a signal peptide. The propeptide occupies 22–26 (DVGER). His-38 is an active-site residue. Mg(2+)-binding residues include Glu-58 and Asp-60. The active-site Nucleophile is His-73. Cys-77 and Cys-83 are oxidised to a cystine. Asp-117 provides a ligand contact to Mg(2+).

Belongs to the arthropod phospholipase D family. Class I subfamily. Mg(2+) is required as a cofactor. In terms of tissue distribution, expressed by the venom gland.

The protein resides in the secreted. The catalysed reaction is an N-(acyl)-sphingosylphosphocholine = an N-(acyl)-sphingosyl-1,3-cyclic phosphate + choline. It carries out the reaction an N-(acyl)-sphingosylphosphoethanolamine = an N-(acyl)-sphingosyl-1,3-cyclic phosphate + ethanolamine. The enzyme catalyses a 1-acyl-sn-glycero-3-phosphocholine = a 1-acyl-sn-glycero-2,3-cyclic phosphate + choline. It catalyses the reaction a 1-acyl-sn-glycero-3-phosphoethanolamine = a 1-acyl-sn-glycero-2,3-cyclic phosphate + ethanolamine. In terms of biological role, dermonecrotic toxins cleave the phosphodiester linkage between the phosphate and headgroup of certain phospholipids (sphingolipid and lysolipid substrates), forming an alcohol (often choline) and a cyclic phosphate. This toxin acts on sphingomyelin (SM) with high activity. It also act on acyl- and alkyl-lysophosphatidylcholine (LPC), but not on sphingosylphosphorylcholine (SPC) and phosphatidylcholine (PC). It may also act on ceramide phosphoethanolamine (CPE), and lysophosphatidylethanolamine (LPE), but not on lysophosphatidylserine (LPS), and lysophosphatidylglycerol (LPG). It acts by transphosphatidylation, releasing exclusively cyclic phosphate products as second products. Induces complement-dependent hemolysis and dermonecrosis. Also induces increased vascular permeability, edema, inflammatory response, and platelet aggregation. The chain is Dermonecrotic toxin LlSicTox-alphaIII1i from Loxosceles laeta (South American recluse spider).